The primary structure comprises 201 residues: Recombination protein RecR (201 aa).

Residues 57–72 form a C4-type zinc finger; it reads CSDCRTFTEQDVCAIC. A Toprim domain is found at 81 to 176; the sequence is GQICVVESPA…MASRIAHGVP (96 aa).

This sequence belongs to the RecR family.

May play a role in DNA repair. It seems to be involved in an RecBC-independent recombinational process of DNA repair. It may act with RecF and RecO. The chain is Recombination protein RecR from Pectobacterium carotovorum subsp. carotovorum (strain PC1).